The sequence spans 489 residues: Rhamnulokinase (489 aa).

Ala13–Arg17 serves as a coordination point for ATP. Cysteines 68 and 222 form a disulfide. Substrate-binding positions include Gly83 and His236 to Thr238. Asp237 serves as the catalytic Proton acceptor. Thr259 contributes to the ATP binding site. Residue Asn296 coordinates substrate. Gln304 is a binding site for ATP. Cys353 and Cys370 form a disulfide bridge. Gly402 contributes to the ATP binding site. Cys413 and Cys417 are disulfide-bonded.

The protein belongs to the rhamnulokinase family. Mg(2+) is required as a cofactor.

It catalyses the reaction L-rhamnulose + ATP = L-rhamnulose 1-phosphate + ADP + H(+). It participates in carbohydrate degradation; L-rhamnose degradation; glycerone phosphate from L-rhamnose: step 2/3. Its function is as follows. Involved in the catabolism of L-rhamnose (6-deoxy-L-mannose). Catalyzes the transfer of the gamma-phosphate group from ATP to the 1-hydroxyl group of L-rhamnulose to yield L-rhamnulose 1-phosphate. This is Rhamnulokinase from Salmonella agona (strain SL483).